The primary structure comprises 1113 residues: Lon protease homolog, mitochondrial (1113 aa).

Residues 1-61 (MLRGQTLPWR…RAFSSSSIRR (61 aa)) constitute a mitochondrion transit peptide. A disordered region spans residues 42-196 (SRLHRSLPTS…SGEKALQKPS (155 aa)). Composition is skewed to basic and acidic residues over residues 64 to 99 (KPPP…RKAA), 124 to 143 (KAGA…KDGN), and 178 to 192 (DGGK…EKAL). A Lon N-terminal domain is found at 204–456 (VMAIPIAKRP…KALVVLKKEL (253 aa)). 609-616 (GPPGVGKT) serves as a coordination point for ATP. Positions 828–858 (LTDEGKAVQEESQKETESPDSKSPVDPEKST) are enriched in basic and acidic residues. Residues 828–864 (LTDEGKAVQEESQKETESPDSKSPVDPEKSTTETPRV) form a disordered region. The Lon proteolytic domain occupies 898–1084 (TFPPGVTMGL…SEVFDLLFTD (187 aa)). Active-site residues include S990 and K1033.

Belongs to the peptidase S16 family. As to quaternary structure, homohexamer or homoheptamer. Organized in a ring with a central cavity.

The protein localises to the mitochondrion matrix. It catalyses the reaction Hydrolysis of proteins in presence of ATP.. Its function is as follows. ATP-dependent serine protease that mediates the selective degradation of misfolded, unassembled or oxidatively damaged polypeptides as well as certain short-lived regulatory proteins in the mitochondrial matrix. May also have a chaperone function in the assembly of inner membrane protein complexes. Participates in the regulation of mitochondrial gene expression and in the maintenance of the integrity of the mitochondrial genome. Binds to mitochondrial DNA in a site-specific manner. In Aspergillus niger (strain ATCC MYA-4892 / CBS 513.88 / FGSC A1513), this protein is Lon protease homolog, mitochondrial (pim1).